The primary structure comprises 582 residues: Protein alan shepard (582 aa).

A compositionally biased stretch (pro residues) spans 1-12 (MHPRYSPAPPPQ). The segment at 1–73 (MHPRYSPAPP…AAPPTSRSAF (73 aa)) is disordered. The residue at position 5 (Tyr-5) is a Phosphotyrosine. A compositionally biased stretch (low complexity) spans 13-24 (QQQQMGGPPHQQ). A compositionally biased stretch (gly residues) spans 25–35 (QGGGGGGGGSM). Positions 37–57 (GPSNAQQLPPQIPRSQNYSNG) are enriched in polar residues. Over residues 58–72 (SSSSAAAAPPTSRSA) the composition is skewed to low complexity. Phosphotyrosine occurs at positions 125 and 142. The segment at 164 to 225 (PATTTYGQRV…TVQNQNQQGG (62 aa)) is disordered. The segment covering 178-225 (SPSNTNSSSSSNTGSQSGTLSTSLSNTTNTNTNMGPNGTVQNQNQQGG) has biased composition (low complexity). 2 consecutive RRM domains span residues 231-304 (TNLY…MAKQ) and 310-389 (TNLY…FADG). A disordered region spans residues 555 to 582 (PMTDSEQASTAASPDEAYTQYPHQAAPK).

Functionally, has a role in the perception of gravity. This chain is Protein alan shepard, found in Drosophila erecta (Fruit fly).